The chain runs to 259 residues: Phosphate import ATP-binding protein PstB 1 (259 aa).

Positions 13–254 constitute an ABC transporter domain; the sequence is IQVRGLEFFY…PSKTQTEDYI (242 aa). 45–52 contacts ATP; the sequence is GPSGCGKS.

It belongs to the ABC transporter superfamily. Phosphate importer (TC 3.A.1.7) family. As to quaternary structure, the complex is composed of two ATP-binding proteins (PstB), two transmembrane proteins (PstC and PstA) and a solute-binding protein (PstS).

Its subcellular location is the cell inner membrane. The catalysed reaction is phosphate(out) + ATP + H2O = ADP + 2 phosphate(in) + H(+). Functionally, part of the ABC transporter complex PstSACB involved in phosphate import. Responsible for energy coupling to the transport system. The polypeptide is Phosphate import ATP-binding protein PstB 1 (Pseudomonas syringae pv. tomato (strain ATCC BAA-871 / DC3000)).